A 619-amino-acid chain; its full sequence is MKKGKLGAIVFGLLFTSSVAGFSKDLTKDNAYQDLNVIEHLISLKYAPLPWKELLFGWDLSQQTQQARLQLVLEEKPTTNYCQKVLSNYVRSLNDYHAGITFYRTESAYIPYVLKLSEDGHVFVVDVQTSQGDIYLGDEILEVDGMGIREAIESLRFGRGSATDYSAAVRSLTSRSAAFGDAVPSGIAMLKLRRPSGLIRSTPVRWRYTPEHIGDFSLVAPLIPEHKPQLPTQSCVLFRSGVNSQSSSSSLFSSYMVPYFWEELRVQNKQRFDSNHHIGSRNGFLPTFGPILWEQDKGPYRSYIFKAKDSQGNPHRIGFLRISSYVWTDLEGLEEDHKDSPWELFGEIIDHLEKETDALIIDQTHNPGGSVFYLYSLLSMLTDHPLDTPKHRMIFTQDEVSSALHWQDLLEDVFTDEQAVAVLGETMEGYCMDMHAVASLQNFSQSVLSSWVSGDINLSKPMPLLGFAQVRPHPKHQYTKPLFMLIDEDDFSCGDLAPAILKDNGRATLIGKPTAGAGGFVFQVTFPNRSGIKGLSLTGSLAVRKDGEFIENLGVAPHIDLGFTSRDLQTSRFTDYVEAVKTIVLTSLSENAKKSEEQTSPQETPEVIRVSYPTTTSAL.

The segment at 591-619 is disordered; sequence NAKKSEEQTSPQETPEVIRVSYPTTTSAL.

This sequence belongs to the chlamydial CPn_1016/CT_858/TC_0248 family.

In Chlamydia pneumoniae (Chlamydophila pneumoniae), this protein is Protein CPn_1016/CP_0837/CPj1016/CpB1054.